Reading from the N-terminus, the 147-residue chain is VEWTEDERTAIKSKWLKINIEEIGPQAMRRLLIVCPWTQRHFANFGNLSTAAAIMNNDKVAKHGTTVMGGLDRAIQNMDDIKNAYRQLSVMHSEKLHVDPDNFRLLAEHITLCMAAKFGPTEFTADVQEAWQKFLMAVTSALARQYH.

Positions 2 to 147 constitute a Globin domain; it reads EWTEDERTAI…VTSALARQYH (146 aa). Heme b is bound by residues His-63 and His-92.

This sequence belongs to the globin family. Heterotetramer of two alpha chains and two beta chains. As to expression, red blood cells.

Involved in oxygen transport from gills to the various peripheral tissues. The polypeptide is Hemoglobin anodic subunit beta (hbb1) (Anguilla anguilla (European freshwater eel)).